A 559-amino-acid chain; its full sequence is DNA primase (559 aa).

The CHC2-type zinc-finger motif lies at 37-61; sequence CPFHEERSASFSVNQIKGFYHCFGC. The region spanning 246–327 is the Toprim domain; sequence KQVIVTEGYL…RGGVILFENN (82 aa). Glu252, Asp296, and Asp298 together coordinate Mg(2+).

This sequence belongs to the DnaG primase family. Monomer. The C-terminal domain DnaB-binding domain exists as a dimer in solution. Interacts with DnaB via its C-terminal domain (residues 415-559 of DnaG); up to 3 DnaG fragments bind to a DnaB hexamer. The cofactor is Zn(2+). Mg(2+) is required as a cofactor.

The enzyme catalyses ssDNA + n NTP = ssDNA/pppN(pN)n-1 hybrid + (n-1) diphosphate.. Its function is as follows. RNA polymerase that catalyzes the synthesis of short RNA molecules used as primers for DNA polymerase during DNA replication. Stimulates the 5'-3' DNA helicase activity of DnaB. The sequence is that of DNA primase from Helicobacter pylori (strain ATCC 700392 / 26695) (Campylobacter pylori).